We begin with the raw amino-acid sequence, 369 residues long: H-2 class I histocompatibility antigen, K-K alpha chain (369 aa).

The signal sequence occupies residues 1-21 (MAPCMLLLLLAAALAPTQTRA). The alpha-1 stretch occupies residues 22 to 111 (GPHSLRYFHT…ALRYYNQSAG (90 aa)). The Extracellular portion of the chain corresponds to 22 to 305 (GPHSLRYFHT…EPPPSTVSNT (284 aa)). An N-linked (GlcNAc...) asparagine glycan is attached at Asn-107. The tract at residues 112–203 (GSHTFQRMYG…QLGNATLPRT (92 aa)) is alpha-2. Residues Cys-122 and Cys-185 are joined by a disulfide bond. N-linked (GlcNAc...) asparagine glycosylation occurs at Asn-197. Positions 204-295 (DSPKAHVTRH…GLPEPLTLRW (92 aa)) are alpha-3. Residues 206-294 (PKAHVTRHSR…QGLPEPLTLR (89 aa)) enclose the Ig-like C1-type domain. A disulfide bond links Cys-224 and Cys-280. The interval 296–305 (EPPPSTVSNT) is connecting peptide. The helical transmembrane segment at 306-328 (VIIAVLVVLGAAIVTGAVVAFVM) threads the bilayer. The Cytoplasmic segment spans residues 329 to 369 (KMRRRNTGGKGGDYALAPGSQTSDLSLPDCKVMVHDPHSLA). A phosphoserine mark is found at Ser-351 and Ser-354.

This sequence belongs to the MHC class I family. As to quaternary structure, heterodimer of an alpha chain and a beta chain (beta-2-microglobulin).

The protein resides in the membrane. In terms of biological role, involved in the presentation of foreign antigens to the immune system. This chain is H-2 class I histocompatibility antigen, K-K alpha chain (H2-K1), found in Mus musculus (Mouse).